We begin with the raw amino-acid sequence, 160 residues long: Non-secretory ribonuclease (160 aa).

The signal sequence occupies residues 1 to 27; sequence MVPKLFTSPICLLLLLGLMGVEGSLHA. Residue Trp-34 is glycosylated (C-linked (Man) tryptophan). His-42 functions as the Proton acceptor in the catalytic mechanism. A glycan (N-linked (GlcNAc...) asparagine) is linked at Asn-44. Intrachain disulfides connect Cys-50/Cys-110, Cys-64/Cys-122, Cys-82/Cys-137, and Cys-89/Cys-98. 3'-nitrotyrosine is present on Tyr-60. 65-69 lines the substrate pocket; that stretch reads KNQNT. N-linked (GlcNAc...) asparagine glycosylation is found at Asn-92, Asn-111, Asn-118, and Asn-138. The Proton donor role is filled by His-155.

The protein belongs to the pancreatic ribonuclease family. In terms of assembly, interacts with and forms a tight 1:1 complex with RNH1. Dimerization of two such complexes may occur.

It is found in the lysosome. It localises to the cytoplasmic granule. The catalysed reaction is an [RNA] containing cytidine + H2O = an [RNA]-3'-cytidine-3'-phosphate + a 5'-hydroxy-ribonucleotide-3'-[RNA].. The enzyme catalyses an [RNA] containing uridine + H2O = an [RNA]-3'-uridine-3'-phosphate + a 5'-hydroxy-ribonucleotide-3'-[RNA].. In terms of biological role, this is a non-secretory ribonuclease. It is a pyrimidine specific nuclease with a slight preference for U. Cytotoxin and helminthotoxin. Possesses a wide variety of biological activities. The sequence is that of Non-secretory ribonuclease (RNASE2) from Chlorocebus aethiops (Green monkey).